Reading from the N-terminus, the 65-residue chain is Large ribosomal subunit protein bL33m (65 aa).

A mitochondrion-targeting transit peptide spans 1–8 (MFLTTANL).

It belongs to the bacterial ribosomal protein bL33 family. In terms of assembly, component of the mitochondrial ribosome large subunit (39S) which comprises a 16S rRNA and about 50 distinct proteins.

It is found in the mitochondrion. The protein is Large ribosomal subunit protein bL33m (mrpl33) of Tetraodon nigroviridis (Spotted green pufferfish).